A 160-amino-acid polypeptide reads, in one-letter code: MIHDRIEDFLASLPRTGALAGLDLGTKTVGVAVSDGLRRIATPLLTVRRTKFTEDAAKLKAIAAERRLVGIVLGLPRNMDGSEGPRAQSTRAFARNLVQVLPLPVGFWDERLSTVAAERALLEADTSRKRRAEVIDHVAAGYILQGVLDRLDWLGREGGA.

Belongs to the YqgF nuclease family.

The protein localises to the cytoplasm. Its function is as follows. Could be a nuclease involved in processing of the 5'-end of pre-16S rRNA. The sequence is that of Putative pre-16S rRNA nuclease from Cereibacter sphaeroides (strain ATCC 17029 / ATH 2.4.9) (Rhodobacter sphaeroides).